A 195-amino-acid chain; its full sequence is Putative 3-methyladenine DNA glycosylase (195 aa).

The protein belongs to the DNA glycosylase MPG family.

The protein is Putative 3-methyladenine DNA glycosylase of Synechococcus sp. (strain JA-3-3Ab) (Cyanobacteria bacterium Yellowstone A-Prime).